We begin with the raw amino-acid sequence, 148 residues long: NADH-ubiquinone oxidoreductase chain 3 (148 aa).

3 helical membrane-spanning segments follow: residues 19–39 (FYMILVPIISIVLIIINYIIT), 70–90 (FILIAILFLPFDLELTSILPY), and 99–119 (IYGLFILLYFLLPLIIGFIIE).

Belongs to the complex I subunit 3 family.

It localises to the mitochondrion membrane. The catalysed reaction is a ubiquinone + NADH + 5 H(+)(in) = a ubiquinol + NAD(+) + 4 H(+)(out). Functionally, core subunit of the mitochondrial membrane respiratory chain NADH dehydrogenase (Complex I) that is believed to belong to the minimal assembly required for catalysis. Complex I functions in the transfer of electrons from NADH to the respiratory chain. The immediate electron acceptor for the enzyme is believed to be ubiquinone. The protein is NADH-ubiquinone oxidoreductase chain 3 (ND3) of Wickerhamomyces canadensis (Yeast).